We begin with the raw amino-acid sequence, 177 residues long: Large ribosomal subunit protein uL6 (177 aa).

The protein belongs to the universal ribosomal protein uL6 family. As to quaternary structure, part of the 50S ribosomal subunit.

Its function is as follows. This protein binds to the 23S rRNA, and is important in its secondary structure. It is located near the subunit interface in the base of the L7/L12 stalk, and near the tRNA binding site of the peptidyltransferase center. The protein is Large ribosomal subunit protein uL6 of Magnetococcus marinus (strain ATCC BAA-1437 / JCM 17883 / MC-1).